A 159-amino-acid chain; its full sequence is Phosphopantetheine adenylyltransferase (159 aa).

Thr-10 lines the substrate pocket. Residues Thr-10–Phe-11 and His-18 contribute to the ATP site. Substrate is bound by residues Lys-42, Leu-74, and Arg-88. ATP contacts are provided by residues Gly-89–Arg-91, Glu-99, and Asn-124–Thr-130.

The protein belongs to the bacterial CoaD family. As to quaternary structure, homohexamer. Mg(2+) is required as a cofactor.

The protein resides in the cytoplasm. The enzyme catalyses (R)-4'-phosphopantetheine + ATP + H(+) = 3'-dephospho-CoA + diphosphate. The protein operates within cofactor biosynthesis; coenzyme A biosynthesis; CoA from (R)-pantothenate: step 4/5. Functionally, reversibly transfers an adenylyl group from ATP to 4'-phosphopantetheine, yielding dephospho-CoA (dPCoA) and pyrophosphate. This Shewanella pealeana (strain ATCC 700345 / ANG-SQ1) protein is Phosphopantetheine adenylyltransferase.